The sequence spans 61 residues: Large ribosomal subunit protein uL30 (61 aa).

It belongs to the universal ribosomal protein uL30 family. Part of the 50S ribosomal subunit.

The chain is Large ribosomal subunit protein uL30 from Rubrobacter xylanophilus (strain DSM 9941 / JCM 11954 / NBRC 16129 / PRD-1).